The primary structure comprises 159 residues: Probable epoxidase scpX (159 aa).

Positions Met-1–Asp-25 are cleaved as a signal peptide. Transmembrane regions (helical) follow at residues Trp-59–Ser-79 and Leu-96–Ile-116. Residues Asn-124 and Asn-136 are each glycosylated (N-linked (GlcNAc...) asparagine). Residues Arg-139–Leu-159 traverse the membrane as a helical segment.

The protein belongs to the epoxidase xenD family.

The protein localises to the membrane. The protein operates within mycotoxin biosynthesis. Probable epoxidase; part of the gene scp cluster that mediates the biosynthesis of a hirsutellone-like compound that has still to be identified. The protein is Probable epoxidase scpX of Mollisia scopiformis (Conifer needle endophyte fungus).